The chain runs to 483 residues: Cobyric acid synthase (483 aa).

Residues 251 to 438 (ALIVAVPMLP…LHGVFSADRF (188 aa)) enclose the GATase cobBQ-type domain. Cys-333 functions as the Nucleophile in the catalytic mechanism. Residue His-430 is part of the active site.

This sequence belongs to the CobB/CobQ family. CobQ subfamily.

It functions in the pathway cofactor biosynthesis; adenosylcobalamin biosynthesis. Functionally, catalyzes amidations at positions B, D, E, and G on adenosylcobyrinic A,C-diamide. NH(2) groups are provided by glutamine, and one molecule of ATP is hydrogenolyzed for each amidation. This Brucella suis (strain ATCC 23445 / NCTC 10510) protein is Cobyric acid synthase.